A 566-amino-acid chain; its full sequence is Putative ABC transporter ATP-binding protein BA_2641/GBAA_2641/BAS2461 (566 aa).

2 consecutive ABC transporter domains span residues 5-246 (ISFE…GLRE) and 300-533 (LKVE…ANLK). ATP-binding positions include 39–46 (GRSGSGKS) and 333–340 (GHNGAGKS).

It belongs to the ABC transporter superfamily.

It is found in the cell membrane. In terms of biological role, probably part of an ABC transporter complex. Responsible for energy coupling to the transport system. This chain is Putative ABC transporter ATP-binding protein BA_2641/GBAA_2641/BAS2461, found in Bacillus anthracis.